A 607-amino-acid polypeptide reads, in one-letter code: Elongation factor 4 (607 aa).

One can recognise a tr-type G domain in the interval 11-193; that stretch reads EKIRNFSIIA…QIVEKVPAPT (183 aa). GTP is bound by residues 23–28 and 140–143; these read DHGKST and NKID.

This sequence belongs to the TRAFAC class translation factor GTPase superfamily. Classic translation factor GTPase family. LepA subfamily.

It is found in the cell membrane. The enzyme catalyses GTP + H2O = GDP + phosphate + H(+). Required for accurate and efficient protein synthesis under certain stress conditions. May act as a fidelity factor of the translation reaction, by catalyzing a one-codon backward translocation of tRNAs on improperly translocated ribosomes. Back-translocation proceeds from a post-translocation (POST) complex to a pre-translocation (PRE) complex, thus giving elongation factor G a second chance to translocate the tRNAs correctly. Binds to ribosomes in a GTP-dependent manner. In Streptococcus pneumoniae serotype 19F (strain G54), this protein is Elongation factor 4.